We begin with the raw amino-acid sequence, 394 residues long: Phosphoglycerate kinase (394 aa).

Residues 21 to 23 (DFN), arginine 36, 59 to 62 (HLGR), arginine 118, and arginine 151 each bind substrate. Serine 183 is modified (phosphoserine). ATP-binding residues include lysine 201 and glycine 292. Phosphothreonine is present on threonine 299. Residues glutamate 323 and 350–353 (GGDS) each bind ATP.

Belongs to the phosphoglycerate kinase family. In terms of assembly, monomer.

It is found in the cytoplasm. The enzyme catalyses (2R)-3-phosphoglycerate + ATP = (2R)-3-phospho-glyceroyl phosphate + ADP. It functions in the pathway carbohydrate degradation; glycolysis; pyruvate from D-glyceraldehyde 3-phosphate: step 2/5. The chain is Phosphoglycerate kinase from Bacillus cereus (strain ZK / E33L).